A 4545-amino-acid chain; its full sequence is Prolow-density lipoprotein receptor-related protein 1 (4545 aa).

Residues 1–19 (MLTPPLLLLLPLLSALVSG) form the signal peptide. Residues 20–4424 (ATMDAPKTCS…SQQQPGHMAS (4405 aa)) lie on the Extracellular side of the membrane. LDL-receptor class A domains lie at 26 to 67 (KTCS…ICPQ) and 71 to 111 (QRCP…HCRE). Disulfide bonds link cysteine 28-cysteine 41, cysteine 35-cysteine 54, cysteine 48-cysteine 65, cysteine 73-cysteine 86, cysteine 80-cysteine 99, and cysteine 93-cysteine 109. Positions 112-150 (LRANCSRMGCQHHCVPTPSGPTCYCNSSFQLQADGKTCK) constitute an EGF-like 1 domain. Asparagine 115 is a glycosylation site (N-linked (GlcNAc...) asparagine). Disulfide bonds link cysteine 116–cysteine 125, cysteine 121–cysteine 134, cysteine 136–cysteine 149, cysteine 155–cysteine 165, cysteine 161–cysteine 174, and cysteine 176–cysteine 189. Residue asparagine 137 is glycosylated (N-linked (GlcNAc...) asparagine). The 40-residue stretch at 151 to 190 (DFDECSVYGTCSQLCTNTDGSFTCGCVEGYLLQPDNRSCK) folds into the EGF-like 2; calcium-binding domain. Asparagine 186, asparagine 240, and asparagine 275 each carry an N-linked (GlcNAc...) asparagine glycan. LDL-receptor class B repeat units lie at residues 293-335 (GNFY…DPAM), 336-379 (GKVF…DLVS), and 380-423 (RLVY…FENY). Asparagine 358 carries N-linked (GlcNAc...) asparagine glycosylation. The N-linked (GlcNAc...) asparagine glycan is linked to asparagine 447. An EGF-like 3 domain is found at 475 to 521 (RSHACENDQYGKPGGCSDICLLANSHKARTCRCRSGFSLGSDGKSCK). 3 disulfide bridges follow: cysteine 479–cysteine 494, cysteine 490–cysteine 505, and cysteine 507–cysteine 520. LDL-receptor class B repeat units lie at residues 572–614 (GFIY…DWMG), 615–660 (DNLY…DPLN), 661–711 (GWMY…DIPA), and 712–755 (GRLY…HGNY). Asparagine 730 carries an N-linked (GlcNAc...) asparagine glycan. An EGF-like 4 domain is found at 804–844 (GTNKCRVNNGGCSSLCLATPGSRQCACAEDQVLDTDGVTCL). Disulfide bonds link cysteine 808–cysteine 819, cysteine 815–cysteine 828, cysteine 830–cysteine 843, cysteine 855–cysteine 867, cysteine 862–cysteine 880, cysteine 874–cysteine 891, cysteine 896–cysteine 908, cysteine 903–cysteine 921, cysteine 915–cysteine 932, cysteine 937–cysteine 949, cysteine 944–cysteine 962, cysteine 956–cysteine 972, cysteine 977–cysteine 990, cysteine 985–cysteine 1003, cysteine 997–cysteine 1012, cysteine 1016–cysteine 1028, cysteine 1023–cysteine 1041, cysteine 1035–cysteine 1052, cysteine 1063–cysteine 1076, cysteine 1070–cysteine 1089, cysteine 1083–cysteine 1098, cysteine 1105–cysteine 1119, cysteine 1113–cysteine 1132, cysteine 1126–cysteine 1141, cysteine 1146–cysteine 1160, cysteine 1153–cysteine 1173, cysteine 1167–cysteine 1183, cysteine 1186–cysteine 1197, cysteine 1193–cysteine 1207, cysteine 1209–cysteine 1222, cysteine 1228–cysteine 1238, cysteine 1234–cysteine 1247, and cysteine 1249–cysteine 1262. 8 LDL-receptor class A domains span residues 853–893 (PQCQ…LCHQ), 894–934 (HTCP…TCSA), 935–974 (RTCP…SCAY), 975–1014 (PTCF…GCSH), 1014–1054 (HSCS…NCTN), 1061–1100 (GGCH…SCEG), 1103–1143 (HVCD…NCEA), and 1144–1183 (LACR…GELC). The Ca(2+) site is built by tryptophan 872, aspartate 875, aspartate 877, aspartate 879, aspartate 885, and glutamate 886. Asparagine 929 carries an N-linked (GlcNAc...) asparagine glycan. 6 residues coordinate Ca(2+): tryptophan 1033, aspartate 1036, aspartate 1038, aspartate 1040, aspartate 1046, and glutamate 1047. Asparagine 1051 is a glycosylation site (N-linked (GlcNAc...) asparagine). The Ca(2+) site is built by tryptophan 1081, aspartate 1084, aspartate 1086, aspartate 1088, aspartate 1094, and glutamate 1095. Asparagine 1155 and asparagine 1156 each carry an N-linked (GlcNAc...) asparagine glycan. EGF-like domains follow at residues 1184 to 1223 (DQCS…HTCQ) and 1224 to 1263 (IQSY…ESCR). N-linked (GlcNAc...) asparagine glycans are attached at residues asparagine 1196 and asparagine 1219. 5 LDL-receptor class B repeats span residues 1310-1356 (SALY…DWIA), 1357-1399 (GNIY…DPRD), 1400-1446 (GILF…DYLE), 1447-1491 (KRIL…YGGE), and 1492-1532 (VYWT…YHPS). Residue asparagine 1512 is glycosylated (N-linked (GlcNAc...) asparagine). The EGF-like 7 domain maps to 1537 to 1580 (APNPCEANGGRGPCSHLCLINYNRTVSCACPHLMKLHKDNTTCY). Cystine bridges form between cysteine 1541–cysteine 1554, cysteine 1550–cysteine 1564, and cysteine 1566–cysteine 1579. Asparagine 1559, asparagine 1576, asparagine 1617, and asparagine 1646 each carry an N-linked (GlcNAc...) asparagine glycan. 4 LDL-receptor class B repeats span residues 1628 to 1670 (QRVY…DWVS), 1671 to 1714 (RNLF…HPLR), 1715 to 1754 (GKLY…DFPE), and 1755 to 1799 (SKLY…MGDK). 4 N-linked (GlcNAc...) asparagine glycosylation sites follow: asparagine 1724, asparagine 1734, asparagine 1764, and asparagine 1826. One can recognise an EGF-like 8 domain in the interval 1847-1888 (GTNPCSVNNGDCSQLCLPTSETTRSCMCTAGYSLRSGQQACE). 3 disulfide bridges follow: cysteine 1851–cysteine 1862, cysteine 1858–cysteine 1872, and cysteine 1874–cysteine 1887. The N-linked (GlcNAc...) asparagine glycan is linked to asparagine 1934. 4 LDL-receptor class B repeats span residues 1935 to 1977 (DTIY…DWIA), 1978 to 2020 (GNIY…HPEK), 2021 to 2064 (GYLF…DYQG), and 2065 to 2108 (GKLY…FEDF). An N-linked (GlcNAc...) asparagine glycan is attached at asparagine 1996. N6-acetyllysine is present on lysine 2010. N-linked (GlcNAc...) asparagine glycosylation is present at asparagine 2049. N-linked (GlcNAc...) asparagine glycans are attached at residues asparagine 2118 and asparagine 2128. The EGF-like 9 domain occupies 2156–2196 (GTNVCAVANGGCQQLCLYRGGGQRACACAHGMLAEDGASCR). Intrachain disulfides connect cysteine 2160–cysteine 2171, cysteine 2167–cysteine 2181, and cysteine 2183–cysteine 2195. LDL-receptor class B repeat units lie at residues 2254 to 2295 (NRIF…HRGW), 2296 to 2344 (DTLY…DECQ), 2345 to 2389 (NLMF…DHRA), 2390 to 2432 (EKLY…YGEH), and 2433 to 2474 (IFWT…VAND). N-linked (GlcNAc...) asparagine glycosylation occurs at asparagine 2473. The 41-residue stretch at 2479–2519 (ELSPCRINNGGCQDLCLLTHQGHVNCSCRGGRILQEDFTCR) folds into the EGF-like 10 domain. 3 cysteine pairs are disulfide-bonded: cysteine 2483–cysteine 2494, cysteine 2490–cysteine 2504, and cysteine 2506–cysteine 2518. The N-linked (GlcNAc...) asparagine glycan is linked to asparagine 2503. N-linked (GlcNAc...) asparagine glycosylation occurs at asparagine 2522. 7 consecutive LDL-receptor class A domains span residues 2523 to 2564 (SSCR…YCNS), 2565 to 2603 (RRCK…PCNK), 2604 to 2642 (TACG…NCSA), 2643 to 2691 (TDCS…DCPG), 2695 to 2733 (PRCP…HCNK), 2733 to 2772 (KFCS…HCEG), and 2773 to 2815 (KTCG…GCLY). 6 disulfide bridges follow: cysteine 2525/cysteine 2538, cysteine 2533/cysteine 2551, cysteine 2545/cysteine 2562, cysteine 2567/cysteine 2579, cysteine 2574/cysteine 2592, and cysteine 2586/cysteine 2601. Asparagine 2602 is a glycosylation site (N-linked (GlcNAc...) asparagine). Intrachain disulfides connect cysteine 2606–cysteine 2618, cysteine 2613–cysteine 2631, cysteine 2625–cysteine 2640, cysteine 2645–cysteine 2667, cysteine 2661–cysteine 2680, cysteine 2674–cysteine 2689, cysteine 2697–cysteine 2709, cysteine 2704–cysteine 2722, cysteine 2716–cysteine 2731, cysteine 2735–cysteine 2747, cysteine 2742–cysteine 2760, cysteine 2754–cysteine 2770, cysteine 2775–cysteine 2788, cysteine 2782–cysteine 2801, and cysteine 2795–cysteine 2813. Residues asparagine 2621 and asparagine 2639 are each glycosylated (N-linked (GlcNAc...) asparagine). A glycan (N-linked (GlcNAc...) asparagine) is linked at asparagine 2816. LDL-receptor class A domains lie at 2817–2856 (STCD…ECEY), 2857–2900 (PTCG…HCTS), and 2903–2941 (HKCN…RGCH). Disulfide bonds link cysteine 2819–cysteine 2831, cysteine 2826–cysteine 2844, cysteine 2838–cysteine 2854, cysteine 2859–cysteine 2871, cysteine 2866–cysteine 2885, cysteine 2879–cysteine 2898, cysteine 2905–cysteine 2918, cysteine 2913–cysteine 2931, cysteine 2925–cysteine 2940, cysteine 2945–cysteine 2957, cysteine 2953–cysteine 2966, cysteine 2968–cysteine 2981, cysteine 2987–cysteine 2997, cysteine 2993–cysteine 3006, and cysteine 3008–cysteine 3022. The N-linked (GlcNAc...) asparagine glycan is linked to asparagine 2906. Residues 2942-2982 (VNECLSRKLSGCSQDCEDLKIGFKCRCRPGFRLKDDGRTCA) enclose the EGF-like 11 domain. In terms of domain architecture, EGF-like 12; calcium-binding spans 2983–3023 (DLDECSTTFPCSQLCINTHGSYKCLCVEGYAPRGGDPHSCK). Asparagine 3049 and asparagine 3090 each carry an N-linked (GlcNAc...) asparagine glycan. LDL-receptor class B repeat units lie at residues 3070–3114 (QMIY…DWVG), 3115–3157 (GNLY…DVQN), 3158–3201 (GYLY…DYVT), 3202–3244 (ERIY…FEDY), and 3245–3285 (VYWT…FHAL). The N-linked (GlcNAc...) asparagine glycan is linked to asparagine 3265. The EGF-like 13 domain maps to 3291–3332 (PNHPCKVNNGGCSNLCLLSPGGGHKCACPTNFYLGGDGRTCV). Intrachain disulfides connect cysteine 3295–cysteine 3306, cysteine 3302–cysteine 3316, and cysteine 3318–cysteine 3331. 11 LDL-receptor class A domains span residues 3333 to 3372 (SNCT…DCPE), 3373 to 3411 (FKCR…NCDI), 3412 to 3451 (HVCL…DCPE), 3452 to 3492 (VTCA…NCTQ), 3493 to 3534 (MTCG…ECDE), 3535 to 3573 (RTCE…SCTP), 3574 to 3612 (RPCS…DCTP), 3612 to 3650 (PRCD…ACGT), 3653 to 3693 (RTCP…ECAR), 3694 to 3734 (FICP…DCEP), and 3740 to 3779 (PHCK…DCSI). Residue asparagine 3334 is glycosylated (N-linked (GlcNAc...) asparagine). Disulfide bonds link cysteine 3335–cysteine 3347, cysteine 3342–cysteine 3360, cysteine 3354–cysteine 3370, cysteine 3375–cysteine 3387, cysteine 3382–cysteine 3400, cysteine 3394–cysteine 3409, cysteine 3414–cysteine 3427, cysteine 3421–cysteine 3440, cysteine 3434–cysteine 3449, cysteine 3454–cysteine 3467, cysteine 3461–cysteine 3480, cysteine 3474–cysteine 3490, cysteine 3495–cysteine 3508, cysteine 3502–cysteine 3521, cysteine 3515–cysteine 3532, cysteine 3537–cysteine 3549, cysteine 3544–cysteine 3562, cysteine 3556–cysteine 3571, cysteine 3576–cysteine 3588, cysteine 3583–cysteine 3601, cysteine 3595–cysteine 3610, cysteine 3614–cysteine 3626, cysteine 3621–cysteine 3639, cysteine 3633–cysteine 3648, cysteine 3655–cysteine 3667, cysteine 3662–cysteine 3680, cysteine 3674–cysteine 3691, cysteine 3696–cysteine 3710, cysteine 3704–cysteine 3723, cysteine 3717–cysteine 3732, cysteine 3742–cysteine 3755, cysteine 3750–cysteine 3768, cysteine 3762–cysteine 3777, cysteine 3786–cysteine 3799, cysteine 3793–cysteine 3808, cysteine 3810–cysteine 3823, cysteine 3829–cysteine 3839, cysteine 3835–cysteine 3848, and cysteine 3850–cysteine 3861. Asparagine 3489 carries an N-linked (GlcNAc...) asparagine glycan. N-linked (GlcNAc...) asparagine glycosylation occurs at asparagine 3663. 2 EGF-like domains span residues 3782 to 3824 (KLTS…PGCQ) and 3825 to 3862 (DINE…NTCK). A glycan (N-linked (GlcNAc...) asparagine) is linked at asparagine 3789. N-linked (GlcNAc...) asparagine glycosylation is present at asparagine 3840. 4 LDL-receptor class B repeats span residues 3913–3955 (GRVY…HLNI), 3971–4013 (GNVY…DPLR), 4014–4057 (GTMY…DYHN), and 4058–4102 (ERLY…FEDY). Residues 3941 to 3944 (RHRR) carry the Recognition site for proteolytical processing motif. N-linked (GlcNAc...) asparagine glycosylation is present at asparagine 3954. Residues asparagine 4076 and asparagine 4126 are each glycosylated (N-linked (GlcNAc...) asparagine). EGF-like domains are found at residues 4148-4184 (VTNP…GTCV), 4197-4233 (RPGT…DKCE), 4233-4269 (ELDQ…PKCT), 4269-4305 (TAQV…DRCQ), 4305-4341 (QYRQ…PRCE), 4341-4376 (EVNK…PSCL), and 4374-4410 (SCLT…PRCE). Intrachain disulfides connect cysteine 4152–cysteine 4161, cysteine 4157–cysteine 4170, cysteine 4172–cysteine 4183, cysteine 4201–cysteine 4211, cysteine 4205–cysteine 4221, cysteine 4223–cysteine 4232, cysteine 4237–cysteine 4247, cysteine 4241–cysteine 4257, cysteine 4259–cysteine 4268, cysteine 4273–cysteine 4283, cysteine 4277–cysteine 4293, cysteine 4295–cysteine 4304, cysteine 4309–cysteine 4319, cysteine 4313–cysteine 4329, cysteine 4331–cysteine 4340, cysteine 4345–cysteine 4353, and cysteine 4348–cysteine 4364. N-linked (GlcNAc...) asparagine glycosylation is present at asparagine 4180. N-linked (GlcNAc...) asparagine glycosylation is found at asparagine 4279 and asparagine 4280. N-linked (GlcNAc...) asparagine glycosylation is present at asparagine 4365. 4 disulfides stabilise this stretch: cysteine 4366/cysteine 4375, cysteine 4378/cysteine 4388, cysteine 4382/cysteine 4398, and cysteine 4400/cysteine 4409. A helical transmembrane segment spans residues 4425–4445 (ILIPLLLLLLLLLVAGVVFWY). Over 4446 to 4545 (KRRVRGAKGF…PEDEIGDPLA (100 aa)) the chain is Cytoplasmic. The interval 4446-4545 (KRRVRGAKGF…PEDEIGDPLA (100 aa)) is interaction with MAFB. Threonine 4461 is subject to Phosphothreonine. An NPXY motif motif is present at residues 4503 to 4508 (FTNPVY). Residue tyrosine 4508 is modified to Phosphotyrosine. Serine 4518, serine 4521, and serine 4524 each carry phosphoserine.

Belongs to the LDLR family. In terms of assembly, heterodimer of an 85-kDa membrane-bound carboxyl subunit and a non-covalently attached 515-kDa N-terminal subunit. Intracellular domain interacts with MAFB. Found in a complex with PID1/PCLI1, LRP1 and CUBNI. Interacts with SNX17, PID1/PCLI1, PDGF and CUBN. The intracellular domain interacts with SHC1, GULP1 and DAB1. Can weakly interact (via NPXY motif) with DAB2 (via PID domain); the interaction is enhanced by tyrosine phosphorylation of the NPXY motif. Interacts with MDK; promotes neuronal survival. Interacts with LRPAP1; this interaction is followed by rapid internalization. Interacts with uPA/PLAU and PAI1/SERPINE1, either individually or in complex with each other, leading to rapid endocytosis; this interaction is abolished in the presence of LRPAP1/RAP. Also interacts with tPA/PLAT alone or in complex with SERPINE1. Interacts with the urokinase receptor PLAUR; this interaction leads to PLAUR internalization and is impaired in the presence of SORL1. Interacts with PDGFB. Interacts with TAU/MAPT, leading to endocytosis; this interaction is reduced in the presence of LRPAP1/RAP. Interacts with IGFBP3. Interacts with ADGRG6. Phosphorylated on serine and threonine residues. In terms of processing, phosphorylated on tyrosine residues upon stimulation with PDGF. Tyrosine phosphorylation promotes interaction with SHC1. Post-translationally, cleaved into a 85 kDa membrane-spanning subunit (LRP-85) and a 515 kDa large extracellular domain (LRP-515) that remains non-covalently associated. Gamma-secretase-dependent cleavage of LRP-85 releases the intracellular domain from the membrane.

It is found in the cell membrane. The protein resides in the membrane. The protein localises to the coated pit. Its subcellular location is the golgi outpost. It localises to the cytoplasm. It is found in the cytoskeleton. The protein resides in the microtubule organizing center. The protein localises to the nucleus. In terms of biological role, endocytic receptor involved in endocytosis and in phagocytosis of apoptotic cells. Required for early embryonic development. Involved in cellular lipid homeostasis. Involved in the plasma clearance of chylomicron remnants and activated LRPAP1 (alpha 2-macroglobulin), as well as the local metabolism of complexes between plasminogen activators and their endogenous inhibitors. Acts as an alpha-2-macroglobulin receptor. Acts as a TAU/MAPT receptor and controls the endocytosis of TAU/MAPT as well as its subsequent spread. May modulate cellular events, such as APP metabolism, kinase-dependent intracellular signaling, neuronal calcium signaling as well as neurotransmission. Also acts as a receptor for IGFBP3 to mediate cell growth inhibition. Its function is as follows. (Microbial infection) Functions as a receptor for Vibrio cholerae cholix toxin and for Pseudomonas aeruginosa exotoxin A. The chain is Prolow-density lipoprotein receptor-related protein 1 from Mus musculus (Mouse).